A 183-amino-acid polypeptide reads, in one-letter code: Ribulose bisphosphate carboxylase small subunit, chloroplastic (183 aa).

Residues 1–59 (MASSMISSGTVATVSADRPAPAQARMVAPFTGLKSSSASPVTRKSNDITSIASNGGRVQ) constitute a chloroplast transit peptide.

This sequence belongs to the RuBisCO small chain family. Heterohexadecamer of 8 large and 8 small subunits.

Its subcellular location is the plastid. It is found in the chloroplast. Functionally, ruBisCO catalyzes two reactions: the carboxylation of D-ribulose 1,5-bisphosphate, the primary event in carbon dioxide fixation, as well as the oxidative fragmentation of the pentose substrate. Both reactions occur simultaneously and in competition at the same active site. Although the small subunit is not catalytic it is essential for maximal activity. This is Ribulose bisphosphate carboxylase small subunit, chloroplastic from Malus sp. (Crab apple).